The following is a 404-amino-acid chain: Agnestins biosynthesis cluster transcription factor AgnL10 (404 aa).

Residues Cys23 to Cys50 constitute a DNA-binding region (zn(2)-C6 fungal-type). 3 disordered regions span residues Ala54–Ala83, Ala188–Gly209, and Pro294–Asp318. Basic residues predominate over residues Arg57–Asn68. The span at Pro74 to Ala83 shows a compositional bias: polar residues. Over residues Ala188 to Ala197 the composition is skewed to low complexity.

It localises to the nucleus. Functionally, transcription factor that regulates the expression of the gene cluster that mediates the biosynthesis of agnestins, dihydroxy-xanthone metabolites. The protein is Agnestins biosynthesis cluster transcription factor AgnL10 of Paecilomyces divaricatus (Penicillium divaricatum).